A 37-amino-acid chain; its full sequence is Photosystem I reaction center subunit VIII (37 aa).

A helical membrane pass occupies residues 10–30 (IFVPLVGLVFPAIAMASLSLY).

This sequence belongs to the PsaI family.

The protein localises to the plastid. Its subcellular location is the chloroplast thylakoid membrane. Its function is as follows. May help in the organization of the PsaL subunit. The protein is Photosystem I reaction center subunit VIII of Gossypium hirsutum (Upland cotton).